A 580-amino-acid polypeptide reads, in one-letter code: 2-succinyl-5-enolpyruvyl-6-hydroxy-3-cyclohexene-1-carboxylate synthase (580 aa).

The protein belongs to the TPP enzyme family. MenD subfamily. As to quaternary structure, homodimer. Mg(2+) serves as cofactor. It depends on Mn(2+) as a cofactor. The cofactor is thiamine diphosphate.

The enzyme catalyses isochorismate + 2-oxoglutarate + H(+) = 5-enolpyruvoyl-6-hydroxy-2-succinyl-cyclohex-3-ene-1-carboxylate + CO2. It participates in quinol/quinone metabolism; 1,4-dihydroxy-2-naphthoate biosynthesis; 1,4-dihydroxy-2-naphthoate from chorismate: step 2/7. It functions in the pathway quinol/quinone metabolism; menaquinone biosynthesis. Catalyzes the thiamine diphosphate-dependent decarboxylation of 2-oxoglutarate and the subsequent addition of the resulting succinic semialdehyde-thiamine pyrophosphate anion to isochorismate to yield 2-succinyl-5-enolpyruvyl-6-hydroxy-3-cyclohexene-1-carboxylate (SEPHCHC). This is 2-succinyl-5-enolpyruvyl-6-hydroxy-3-cyclohexene-1-carboxylate synthase from Bacillus pumilus (strain SAFR-032).